The chain runs to 255 residues: Protein C activator (255 aa).

A signal peptide spans 1–18 (MVLIRVLANLLILHLSYA). A propeptide spanning residues 19–24 (QKSSEL) is cleaved from the precursor. The Peptidase S1 domain maps to 25–246 (VIGGDECNIN…YTDWIQSIIS (222 aa)). 6 disulfide bridges follow: cysteine 31-cysteine 162, cysteine 49-cysteine 65, cysteine 97-cysteine 253, cysteine 141-cysteine 207, cysteine 173-cysteine 186, and cysteine 197-cysteine 222. Asparagine 45 is a glycosylation site (N-linked (GlcNAc...) asparagine). Catalysis depends on histidine 64, which acts as the Charge relay system. Asparagine 102 is a glycosylation site (N-linked (GlcNAc...) asparagine). The active-site Charge relay system is the aspartate 109. N-linked (GlcNAc...) asparagine glycosylation is present at asparagine 153. Serine 201 serves as the catalytic Charge relay system.

The protein belongs to the peptidase S1 family. Snake venom subfamily. As to quaternary structure, monomer. Expressed by the venom gland.

It localises to the secreted. Functionally, snake venom serine protease that selectively cleaves the heavy chain of protein C (PROC). This activation is thrombomodulin-independent. The polypeptide is Protein C activator (Agkistrodon piscivorus leucostoma (Western cottonmouth)).